A 193-amino-acid chain; its full sequence is MIILGVDPGLTRCGVGVIEAGAYRRLSFIHVDVVRSDPKTSQDLRLLAIYNGLVEKIERFAPDAVSIERVFAQENRNTVLGTAQAAGLAMLAAAQRGIPVALHTPTESKLAITGNGKAEKIQMERMVARILGLNTLPKPADAADALAIAICHALRPAGALQGGEREQHLTAAQRQWAQASQKAARRQGVRRGM.

Residues D7, E68, and D141 contribute to the active site. Mg(2+)-binding residues include D7, E68, and D141.

This sequence belongs to the RuvC family. In terms of assembly, homodimer which binds Holliday junction (HJ) DNA. The HJ becomes 2-fold symmetrical on binding to RuvC with unstacked arms; it has a different conformation from HJ DNA in complex with RuvA. In the full resolvosome a probable DNA-RuvA(4)-RuvB(12)-RuvC(2) complex forms which resolves the HJ. Requires Mg(2+) as cofactor.

It localises to the cytoplasm. It carries out the reaction Endonucleolytic cleavage at a junction such as a reciprocal single-stranded crossover between two homologous DNA duplexes (Holliday junction).. Its function is as follows. The RuvA-RuvB-RuvC complex processes Holliday junction (HJ) DNA during genetic recombination and DNA repair. Endonuclease that resolves HJ intermediates. Cleaves cruciform DNA by making single-stranded nicks across the HJ at symmetrical positions within the homologous arms, yielding a 5'-phosphate and a 3'-hydroxyl group; requires a central core of homology in the junction. The consensus cleavage sequence is 5'-(A/T)TT(C/G)-3'. Cleavage occurs on the 3'-side of the TT dinucleotide at the point of strand exchange. HJ branch migration catalyzed by RuvA-RuvB allows RuvC to scan DNA until it finds its consensus sequence, where it cleaves and resolves the cruciform DNA. The protein is Crossover junction endodeoxyribonuclease RuvC of Bifidobacterium adolescentis (strain ATCC 15703 / DSM 20083 / NCTC 11814 / E194a).